The following is a 1438-amino-acid chain: DNA polymerase III PolC-type (1438 aa).

Positions 422–578 constitute an Exonuclease domain; the sequence is YVVFDVETTG…YDTEATAYIF (157 aa).

The protein belongs to the DNA polymerase type-C family. PolC subfamily.

The protein localises to the cytoplasm. The enzyme catalyses DNA(n) + a 2'-deoxyribonucleoside 5'-triphosphate = DNA(n+1) + diphosphate. Required for replicative DNA synthesis. This DNA polymerase also exhibits 3' to 5' exonuclease activity. This Staphylococcus epidermidis (strain ATCC 35984 / DSM 28319 / BCRC 17069 / CCUG 31568 / BM 3577 / RP62A) protein is DNA polymerase III PolC-type.